The chain runs to 3476 residues: Abnormal spindle-like microcephaly-associated protein homolog (3476 aa).

The interval 1-30 (MANRRVGRGCWEVSPTERRPPAGLRGPAAE) is disordered. Phosphoserine is present on residues S280, S283, S367, S392, and S425. Disordered regions lie at residues 416 to 443 (SNEN…ECQG) and 562 to 581 (APSS…GSME). At S604 the chain carries Phosphoserine. A Calponin-homology (CH) 1 domain is found at 919–1055 (KASKEILLAF…LLWKIAFAFQ (137 aa)). A coiled-coil region spans residues 1056 to 1077 (VDISLNLDQLKEEIAFLKHTKS). The residue at position 1102 (S1102) is a Phosphoserine. In terms of domain architecture, Calponin-homology (CH) 2 spans 1109 to 1260 (SENIKLLMDW…YLSFLCARLL (152 aa)). IQ domains lie at 1346-1377 (QNKA…IILQ), 1392-1421 (YLWA…MLKS), 1581-1612 (LKKT…VIIQ), 1604-1633 (MKKA…KTRS), 1631-1660 (TRSA…SVIK), 1654-1683 (ILTS…ATIK), 1727-1756 (MRES…AVIS), 1750-1781 (QRKA…IVIQ), 1800-1829 (VKKA…AALK), 1823-1852 (QSIA…SIIK), 1873-1902 (TKAA…AVLK), 1896-1927 (EHQA…LVIQ), 1946-1977 (LRHA…VIIQ), 1969-2000 (QHKC…LLIQ), 2019-2048 (TKAA…AAVT), 2042-2073 (CNKA…IIIQ), 2092-2123 (LKKT…TFIK), 2115-2146 (MHRA…IVIQ), 2165-2196 (ILKA…TLIQ), 2238-2269 (LRHS…TLIQ), 2261-2292 (MHIA…ILIQ), 2310-2341 (VQNA…TFIQ), 2333-2364 (MHRA…VVIQ), 2383-2414 (QRHS…TLIQ), 2406-2437 (MHSS…IFVQ), 2456-2487 (LRKA…ILIQ), 2479-2510 (MQRA…ILIQ), 2529-2560 (QWHS…IIIQ), 2623-2652 (QHQA…TVVS), 2664-2695 (RTQA…TLIQ), 2687-2718 (MHQA…VVIQ), 2737-2766 (VQKS…EKVA), 2858-2889 (QKRA…VVLQ), 2908-2937 (IRSS…STIK), 2931-2962 (IKNS…KIQA), 2953-2984 (KVKA…KIIQ), 3028-3059 (RHRA…LIIQ), 3078-3109 (FKKS…RLLH), 3180-3209 (RNRA…GIIK), and 3203-3234 (FTSG…IRLS).

The protein resides in the cytoplasm. Its subcellular location is the cytoskeleton. It is found in the spindle. It localises to the nucleus. Its function is as follows. Probable role in mitotic spindle regulation and coordination of mitotic processes. May have a preferential role in regulating neurogenesis. The protein is Abnormal spindle-like microcephaly-associated protein homolog (ASPM) of Gorilla gorilla gorilla (Western lowland gorilla).